Reading from the N-terminus, the 302-residue chain is tRNA-cytidine(32) 2-sulfurtransferase (302 aa).

The short motif at 45 to 50 (SGGKDS) is the PP-loop motif element. The [4Fe-4S] cluster site is built by Cys120, Cys123, and Cys211.

It belongs to the TtcA family. As to quaternary structure, homodimer. The cofactor is Mg(2+). [4Fe-4S] cluster is required as a cofactor.

It is found in the cytoplasm. The catalysed reaction is cytidine(32) in tRNA + S-sulfanyl-L-cysteinyl-[cysteine desulfurase] + AH2 + ATP = 2-thiocytidine(32) in tRNA + L-cysteinyl-[cysteine desulfurase] + A + AMP + diphosphate + H(+). It functions in the pathway tRNA modification. Its function is as follows. Catalyzes the ATP-dependent 2-thiolation of cytidine in position 32 of tRNA, to form 2-thiocytidine (s(2)C32). The sulfur atoms are provided by the cysteine/cysteine desulfurase (IscS) system. The sequence is that of tRNA-cytidine(32) 2-sulfurtransferase from Cellvibrio japonicus (strain Ueda107) (Pseudomonas fluorescens subsp. cellulosa).